We begin with the raw amino-acid sequence, 395 residues long: Aurora kinase A (395 aa).

The tract at residues 1-114 (MDRCKENCVS…QASLQKTEDT (114 aa)) is disordered. Polar residues-rich tracts occupy residues 29–60 (QIPSQNLGSASSGQAQRVLCPSNSQRVPSQAQ) and 84–99 (RLNNPQKNEQPAASGN). Phosphoserine is present on residues Ser40 and Ser50. The segment covering 100-114 (DSEKEQASLQKTEDT) has biased composition (basic and acidic residues). One can recognise a Protein kinase domain in the interval 124–374 (FDIGRPLGKG…LAEVLEHPWI (251 aa)). Residues Lys134, Lys153, and 201–204 (LEYA) contribute to the ATP site. The Proton acceptor role is filled by Asp247. Lys249 participates in a covalent cross-link: Glycyl lysine isopeptide (Lys-Gly) (interchain with G-Cter in SUMO2). ATP contacts are provided by residues 251–252 (EN) and Asp265. The interval 271–284 (HAPSSRRTTMCGTL) is activation segment. Phosphothreonine is present on residues Thr278 and Thr279. The residue at position 333 (Ser333) is a Phosphoserine; by PKA and PAK. Residues 376 to 385 (ANSSKPPTGH) show a composition bias toward polar residues. The disordered stretch occupies residues 376 to 395 (ANSSKPPTGHTSKEPTSKSS). Over residues 386–395 (TSKEPTSKSS) the composition is skewed to basic and acidic residues.

The protein belongs to the protein kinase superfamily. Ser/Thr protein kinase family. Aurora subfamily. In terms of assembly, part of a complex composed of NEDD9, AURKA and CTTN; within the complex NEDD9 acts as a scaffold protein and is required for complex formation. Identified in a complex with AUNIP and NIN. Interacts with CPEB1, JTB, TACC1, TPX2, PPP2CA, as well as with the protein phosphatase type 1 (PP1) isoforms PPP1CA, PPP1CB and PPP1CC. Also interacts with its substrates ARHGEF2, BORA, KIF2A, PARD3, and p53/TP53. Interaction with BORA promotes phosphorylation of PLK1. Interacts with GADD45A, competing with its oligomerization. Interacts with FBXL7 and CIMAP3. Interacts (via C-terminus) with AUNIP (via C-terminus). Interacts with SIRT2. Interacts with FRY; this interaction facilitates AURKA-mediated PLK1 phosphorylation. Interacts with MYCN; interaction is phospho-independent and triggers AURKA activation; AURKA competes with FBXW7 for binding to unphosphorylated MYCN but not for binding to phosphorylated MYCN. Interacts with HNRNPU. Interacts with AAAS. Interacts with KLHL18 and CUL3. Interacts with FOXP1. Interacts with HDAC6; AURKA-mediated phosphorylation of HDAC6 promotes deacetylation of alpha-tubulin. Activated by phosphorylation at Thr-279; this brings about a change in the conformation of the activation segment. Phosphorylation at Thr-279 varies during the cell cycle and is highest during M phase. Autophosphorylated at Thr-279 upon TPX2 binding. Thr-279 can be phosphorylated by several kinases, including PAK and PKA. Protein phosphatase type 1 (PP1) binds AURKA and inhibits its activity by dephosphorylating Thr-279 during mitosis. Phosphorylation at Ser-333 decreases the kinase activity. PPP2CA controls degradation by dephosphorylating Ser-52 at the end of mitosis. In terms of processing, ubiquitinated by the anaphase-promoting complex (APC), leading to its degradation by the proteasome. Ubiquitinated by CHFR, leading to its degradation by the proteasome. Ubiquitinated by the E3 ubiquitin-protein ligase complex SCF(FBXL7) during mitosis, leading to its degradation by the proteasome. As to expression, detected in embryonic neurons in dorsal root ganglia and brain cortex (at protein level). Highly expressed in testis, in about one third of the seminiferous tubules. Expression is restricted to specific spermatocytes nearing completion of prophase, with levels falling off on transition to elongated spermatids. Highly expressed in the ovary, expression in the oocyte starts around the transition to large growing follicle. Abundant expression is seen in the proliferating granulosa and thecal cells of the growing follicle, and in the young corpus luteum. Very weakly expressed in spleen and intestine.

Its subcellular location is the cytoplasm. It localises to the cytoskeleton. The protein localises to the microtubule organizing center. The protein resides in the centrosome. It is found in the spindle pole. Its subcellular location is the centriole. It localises to the cell projection. The protein localises to the neuron projection. The protein resides in the cilium. It is found in the cilium basal body. Its subcellular location is the basolateral cell membrane. The catalysed reaction is L-seryl-[protein] + ATP = O-phospho-L-seryl-[protein] + ADP + H(+). The enzyme catalyses L-threonyl-[protein] + ATP = O-phospho-L-threonyl-[protein] + ADP + H(+). With respect to regulation, activation of CDK1, appears to be an upstream event of AURKA activation. Phosphatase inhibitor-2 (PPP1R2) and TPX2 act also as activators. Inactivated by the G2 checkpoint. Inhibited by GADD45A and p53/TP53, and through dephosphorylation by protein phosphatase type 1 (PP1). MLN8054 is also a potent and selective inhibitor. Activated during the early phase of cilia disassembly in the presence of CIMAP3. Inhibited by the small molecule inhibitor VX-680. In terms of biological role, mitotic serine/threonine kinase that contributes to the regulation of cell cycle progression. Associates with the centrosome and the spindle microtubules during mitosis and plays a critical role in various mitotic events including the establishment of mitotic spindle, centrosome duplication, centrosome separation as well as maturation, chromosomal alignment, spindle assembly checkpoint, and cytokinesis. Required for normal spindle positioning during mitosis and for the localization of NUMA1 and DCTN1 to the cell cortex during metaphase. Required for initial activation of CDK1 at centrosomes. Phosphorylates numerous target proteins, including ARHGEF2, BORA, BRCA1, CDC25B, DLGP5, HDAC6, KIF2A, LATS2, NDEL1, PARD3, PPP1R2, PLK1, RASSF1, TACC3, p53/TP53 and TPX2. Phosphorylates MCRS1 which is required for MCRS1-mediated kinetochore fiber assembly and mitotic progression. Regulates KIF2A tubulin depolymerase activity. Required for normal axon formation. Plays a role in microtubule remodeling during neurite extension. Important for microtubule formation and/or stabilization. Also acts as a key regulatory component of the p53/TP53 pathway, and particularly the checkpoint-response pathways critical for oncogenic transformation of cells, by phosphorylating and destabilizing p53/TP53. Phosphorylates its own inhibitors, the protein phosphatase type 1 (PP1) isoforms, to inhibit their activity. Inhibits cilia outgrowth. Required for cilia disassembly via phosphorylation of HDAC6 and subsequent deacetylation of alpha-tubulin. Regulates protein levels of the anti-apoptosis protein BIRC5 by suppressing the expression of the SCF(FBXL7) E3 ubiquitin-protein ligase substrate adapter FBXL7 through the phosphorylation of the transcription factor FOXP1. This Mus musculus (Mouse) protein is Aurora kinase A (Aurka).